Consider the following 384-residue polypeptide: Opsin-3 (384 aa).

Residues 1-62 (MATNFTQELY…VSKYWHYVLA (62 aa)) lie on the Extracellular side of the membrane. Residue asparagine 4 is glycosylated (N-linked (GlcNAc...) asparagine). The helical transmembrane segment at 63–83 (LIYTMLMVTSLTGNGIVIWIF) threads the bilayer. The Cytoplasmic segment spans residues 84–94 (STSKSLRSASN). Residues 95 to 115 (MFVINLAVFDLMMMLEMPLLI) traverse the membrane as a helical segment. The Extracellular segment spans residues 116 to 132 (MNSFYQRLVGYQLGCDV). Cysteine 130 and cysteine 207 are oxidised to a cystine. Residues 133-153 (YAVLGSLSGIGGAITNAVIAF) form a helical membrane-spanning segment. Residues 154-171 (DRYKTISSPLDGRINTVQ) lie on the Cytoplasmic side of the membrane. Residues 172-192 (AGLLIAFTWFWALPFTILPAF) form a helical membrane-spanning segment. The Extracellular portion of the chain corresponds to 193 to 219 (RIWGRFVPEGFLTTCSFDYFTEDQDTE). The chain crosses the membrane as a helical span at residues 220 to 240 (VFVACIFVWSYCIPMALICYF). Residues 241-284 (YSQLFGAVRLHERMLQEQAKKMNVKSLASNKEDNSRSVEIRIAK) lie on the Cytoplasmic side of the membrane. The helical transmembrane segment at 285–305 (VAFTIFFLFICAWTPYAFVTM) threads the bilayer. At 306–312 (TGAFGDR) the chain is on the extracellular side. A helical membrane pass occupies residues 313–333 (TLLTPIATMIPAVCCKVVSCI). Residues 334–384 (DPWVYAINHPRYRAELQKRLPWMGVREQDPDAVSTTTSVATAGFQPPAAEA) are Cytoplasmic-facing.

This sequence belongs to the G-protein coupled receptor 1 family. Opsin subfamily. In the retina, expression is essentially uniformly distributed but a higher level is seen in the ventral region where the B-cells are localized.

It localises to the membrane. In terms of biological role, visual pigments are the light-absorbing molecules that mediate vision. They consist of an apoprotein, opsin, covalently linked to cis-retinal. May play a role in photoperiodic photoreception. The protein is Opsin-3 (OP3) of Manduca sexta (Tobacco hawkmoth).